A 277-amino-acid chain; its full sequence is MQHESPTHGMNMSALRRHKQRLDLADETVAIEVPGLNLFYGDKQALFDIALNIPKQKVTSFIGPSGCGKSTLLRSFNRMNDLVDGCRIEGAINLYGHNIYTKGEEVAELRRRVGMVFQKPNPFPKTIYENVVYGLRIQGINKKRVLDEAVEWALKAAALWDEVKDRLHESALGLSGGQQQRLVIARTIAVEPEVLLLDEPCSALDPISTLKVEELIYELKSKYTIVIVTHNMQQAARVSDYTAFMYMGKLVEFGDTDTLFTNPAKKQTEDYITGRYG.

Residues 31–272 (IEVPGLNLFY…PAKKQTEDYI (242 aa)) form the ABC transporter domain. Residue 63–70 (GPSGCGKS) coordinates ATP.

It belongs to the ABC transporter superfamily. Phosphate importer (TC 3.A.1.7) family. As to quaternary structure, the complex is composed of two ATP-binding proteins (PstB), two transmembrane proteins (PstC and PstA) and a solute-binding protein (PstS).

It localises to the cell inner membrane. It carries out the reaction phosphate(out) + ATP + H2O = ADP + 2 phosphate(in) + H(+). Its function is as follows. Part of the ABC transporter complex PstSACB involved in phosphate import. Responsible for energy coupling to the transport system. The protein is Phosphate import ATP-binding protein PstB 2 of Pseudomonas savastanoi pv. phaseolicola (strain 1448A / Race 6) (Pseudomonas syringae pv. phaseolicola (strain 1448A / Race 6)).